A 606-amino-acid polypeptide reads, in one-letter code: Transmembrane 9 superfamily member 1 (606 aa).

Positions 1 to 27 (MTVVGNPRSWSCRWLPILILLLGTGHG) are cleaved as a signal peptide. A glycan (N-linked (GlcNAc...) asparagine) is linked at Asn-178. Helical transmembrane passes span 237–257 (LSII…AVIL), 310–330 (VLGV…MALL), 339–359 (GAIN…SGYV), and 373–393 (VWNI…TWSV). The N-linked (GlcNAc...) asparagine glycan is linked to Asn-401. A run of 4 helical transmembrane segments spans residues 412–432 (ILLL…IGGI), 469–489 (VGGF…FATV), 499–519 (GILF…SIAL), and 535–555 (SVLS…FYYA). Residue Asn-559 is glycosylated (N-linked (GlcNAc...) asparagine). Residues 570-590 (FGYSLLTGYVFFLMLGTISFF) traverse the membrane as a helical segment.

Belongs to the nonaspanin (TM9SF) (TC 9.A.2) family.

The protein resides in the lysosome membrane. Its subcellular location is the cytoplasmic vesicle. The protein localises to the autophagosome membrane. Plays an essential role in autophagy. This Pongo abelii (Sumatran orangutan) protein is Transmembrane 9 superfamily member 1 (TM9SF1).